Reading from the N-terminus, the 400-residue chain is Argininosuccinate synthase (400 aa).

Residues 10–18 and Ala-38 contribute to the ATP site; that span reads AYSGGVDTS. Tyr-89 provides a ligand contact to L-citrulline. Gly-119 contacts ATP. Residues Thr-121, Asn-125, and Asp-126 each coordinate L-aspartate. L-citrulline is bound at residue Asn-125. Residues Arg-129, Ser-177, Ser-186, Glu-262, and Tyr-274 each contribute to the L-citrulline site.

Belongs to the argininosuccinate synthase family. Type 1 subfamily. In terms of assembly, homotetramer.

It is found in the cytoplasm. It catalyses the reaction L-citrulline + L-aspartate + ATP = 2-(N(omega)-L-arginino)succinate + AMP + diphosphate + H(+). Its pathway is amino-acid biosynthesis; L-arginine biosynthesis; L-arginine from L-ornithine and carbamoyl phosphate: step 2/3. This is Argininosuccinate synthase from Prochlorococcus marinus (strain NATL2A).